Reading from the N-terminus, the 560-residue chain is Ribonuclease J 1 (560 aa).

Residues H76, H78, D80, H81, H144, and D166 each coordinate Zn(2+). 366-370 contributes to the substrate binding site; sequence HTSGH. Residue H392 coordinates Zn(2+).

Belongs to the metallo-beta-lactamase superfamily. RNA-metabolizing metallo-beta-lactamase-like family. Bacterial RNase J subfamily. In terms of assembly, homodimer, may be a subunit of the RNA degradosome. It depends on Zn(2+) as a cofactor.

The protein localises to the cytoplasm. Its function is as follows. An RNase that has 5'-3' exonuclease and possibly endonuclease activity. Involved in maturation of rRNA and in some organisms also mRNA maturation and/or decay. Has an overlapping but not completely redundant role with RNase J2 in the decay of mRNA. The sequence is that of Ribonuclease J 1 from Streptococcus pyogenes serotype M3 (strain ATCC BAA-595 / MGAS315).